The primary structure comprises 350 residues: Pleckstrin (350 aa).

In terms of domain architecture, PH 1 spans 4–101; that stretch reads KRIREGYLVK…WVRDIKKAIK (98 aa). Lys-64 carries the N6-acetyllysine modification. Residues Ser-113 and Ser-117 each carry the phosphoserine; by PKC modification. A DEP domain is found at 136–221; sequence TEKGIKELNL…NPDAFYYFPD (86 aa). One can recognise a PH 2 domain in the interval 244-347; the sequence is VIIKQGCLLK…WIRAIQMASR (104 aa).

Its function is as follows. Major protein kinase C substrate of platelets. This Homo sapiens (Human) protein is Pleckstrin (PLEK).